The primary structure comprises 404 residues: MSPSDVPINWKRNLTVTWLGCFLTGAAFSLVMPFLPLYVEQLGVTGHSALNMWSGLVFSITFLFSAIASPFWGGLADRKGRKIMLLRSALGMAIVMLLMGMAQNIWQFLILRALLGLLGGFIPNANALIATQVPRHKSGWALGTLSTGGVSGALLGPLAGGLLAGHYGLRPVFFITASVLFICFLLTFFFIRENFLPVSKKEILHVREVVASLKNPRLVLSLFVTTLIIQVATGSIAPILTLYVRELAGNVSNIAFISGMIASVPGVAALLSAPRLGKLGDRIGPEKILIVALIISVLLLIPMSFVQTPWQLALLRFLLGAADGALLPAVQTLLVYNSTNQIAGRIFSYNQSFRDIGNVTGPLMGAAISASYGFRAVFCVTAGVVLFNAIYSWNSLRRRRLAIE.

Transmembrane regions (helical) follow at residues Leu-19–Val-39, Leu-56–Ala-76, Leu-90–Ile-110, Ala-113–Val-133, Gly-149–Leu-169, Pro-171–Ile-191, Leu-222–Leu-242, Ile-254–Pro-274, Ile-288–Thr-308, Phe-317–Asn-337, and Ala-376–Leu-396.

This sequence belongs to the major facilitator superfamily. DHA1 family. MdtG (TC 2.A.1.2.20) subfamily.

The protein localises to the cell inner membrane. The protein is Multidrug resistance protein MdtG of Salmonella paratyphi C (strain RKS4594).